Consider the following 372-residue polypeptide: MENDKKHNQKQNNVDENEFPNSKVLLVSVKRTRRFLERTARELLAGGTRYIILSGLGDALPLCVQLQSSLQSKNAANVVKIETSYSYFNSNYSYTPGLKIYMEKHPEFKGSRISPGYVSFHEKTDSFTPIYDENPNEYICSLNAGDNNLYVGGEGINGAFSELLSSHNQEVDKYESLFKELLTKAVNENGEKPDEEVKSVLYDNVDKKYPDVKLALCRIRNSLKKGSDHSTGSVFIVTFKKNFPHKKEKNMGMVYVVGPKGKNYNSVEEFLDEVQETAENLMTTLCDYNGLVKREEIKHVRMNTCRICLFSGSIFKHPNASKLDVAKAILNGLAVGYRHGPSPRLNFAYDENVFKDAWVETTGLQVFNHNEQ.

This sequence belongs to the histone-like Alba family. As to quaternary structure, identified in a TARE6-associated complex consisting of over 30 proteins and including ALBA1, ALBA2 and ALBA4; the complex binds to the non-coding subtelomeric repeat region TARE6.

The protein resides in the nucleus. Its subcellular location is the chromosome. It localises to the telomere. The protein localises to the cytoplasm. In terms of biological role, possesses DNA- and RNA-binding activities. Binds to DNA fragments longer than 14 base pairs with relaxed sequence specificity. Associates with the subtelomeric TARE6 repeats. Regulates the abundance of transcript sub-populations in a stage-specific manner. Regulates activation of male gametocytes. Participates in the coordination of sporozoite development in the oocyst. This is DNA/RNA-binding protein ALBA4 from Plasmodium falciparum (isolate 3D7).